The primary structure comprises 360 residues: Phosphoserine aminotransferase (360 aa).

Residue R42 participates in L-glutamate binding. Residues A76–S77, W102, T152, D172, and Q195 contribute to the pyridoxal 5'-phosphate site. N6-(pyridoxal phosphate)lysine is present on K196. N237–T238 lines the pyridoxal 5'-phosphate pocket.

It belongs to the class-V pyridoxal-phosphate-dependent aminotransferase family. SerC subfamily. As to quaternary structure, homodimer. The cofactor is pyridoxal 5'-phosphate.

It is found in the cytoplasm. It carries out the reaction O-phospho-L-serine + 2-oxoglutarate = 3-phosphooxypyruvate + L-glutamate. The catalysed reaction is 4-(phosphooxy)-L-threonine + 2-oxoglutarate = (R)-3-hydroxy-2-oxo-4-phosphooxybutanoate + L-glutamate. It functions in the pathway amino-acid biosynthesis; L-serine biosynthesis; L-serine from 3-phospho-D-glycerate: step 2/3. In terms of biological role, catalyzes the reversible conversion of 3-phosphohydroxypyruvate to phosphoserine and of 3-hydroxy-2-oxo-4-phosphonooxybutanoate to phosphohydroxythreonine. This Bacillus cereus (strain ATCC 10987 / NRS 248) protein is Phosphoserine aminotransferase.